Consider the following 354-residue polypeptide: Zinc finger protein 346 (354 aa).

Matrin-type zinc fingers lie at residues 34–64, 95–125, 165–195, and 232–262; these read TQCK…KVRR, KCCP…NLRL, KFCK…QETK, and FSCD…QLMS. Residues cysteine 36, cysteine 39, histidine 52, histidine 58, cysteine 97, cysteine 100, histidine 113, and histidine 119 each contribute to the Zn(2+) site. The disordered stretch occupies residues 263–343; sequence MTPLSKEGPP…QPYVREDMMG (81 aa). 2 stretches are compositionally biased toward low complexity: residues 270–289 and 310–323; these read GPPA…TGGA and GPSS…MGGL. Pro residues predominate over residues 324–333; the sequence is MPPPYPPPHS.

Its subcellular location is the nucleus. It localises to the cytoplasm. Its function is as follows. Binds preferentially to dsRNA, but also to RNA-DNA hybrids. This chain is Zinc finger protein 346, found in Xenopus tropicalis (Western clawed frog).